Consider the following 352-residue polypeptide: Uroporphyrinogen decarboxylase (352 aa).

Substrate is bound by residues R26–R30, D76, Y153, S208, and H323.

It belongs to the uroporphyrinogen decarboxylase family. In terms of assembly, homodimer.

It is found in the cytoplasm. It catalyses the reaction uroporphyrinogen III + 4 H(+) = coproporphyrinogen III + 4 CO2. It functions in the pathway porphyrin-containing compound metabolism; protoporphyrin-IX biosynthesis; coproporphyrinogen-III from 5-aminolevulinate: step 4/4. Functionally, catalyzes the decarboxylation of four acetate groups of uroporphyrinogen-III to yield coproporphyrinogen-III. This chain is Uroporphyrinogen decarboxylase, found in Prochlorococcus marinus (strain MIT 9303).